A 973-amino-acid chain; its full sequence is Splicing regulator ARVCF (973 aa).

A disordered region spans residues 95-123; that stretch reads VTVEEDPGTPTSHVSIVTSEDGTTRRTET. A phosphothreonine mark is found at Thr-103 and Thr-105. Over residues 103–115 the composition is skewed to polar residues; the sequence is TPTSHVSIVTSED. Omega-N-methylarginine is present on Arg-171. 2 disordered regions span residues 233–254 and 267–331; these read RREA…LPEH and RSLA…QPER. Ser-268 is subject to Phosphoserine. A compositionally biased stretch (acidic residues) spans 271 to 281; it reads ADDEGGPDLEP. Basic and acidic residues predominate over residues 289-303; that stretch reads RRPEYGRGLRARALE. Ser-333, Ser-336, Ser-344, and Ser-346 each carry phosphoserine. ARM repeat units follow at residues 349–388, 391–430, 434–468, 469–509, 527–566, and 576–623; these read STRK…HLCF, EGIK…NLSY, ADNK…VTGT, LWNL…NEDS, LRNV…DTDN, and MRNL…GKKA. The disordered stretch occupies residues 593 to 623; the sequence is YQEVEPGIPGSAATSQRRRKDDASCFGGKKA. Residue Ser-607 is modified to Phosphoserine. The short motif at 608 to 624 is the Nuclear localization signal element; that stretch reads QRRRKDDASCFGGKKAK. A Phosphothreonine modification is found at Thr-637. ARM repeat units lie at residues 641–681, 694–733, 734–776, and 777–821; these read PKRT…AAGA, TYIR…NLSL, DQRN…AVLN, and TIHE…SHVL. Residues 771-955 are required for interaction with RNA-binding proteins DDX5, HNRNPH2 and SRSF1 and with mRNAs; it reads VVAVLNTIHE…VLGPGAPPFC (185 aa). Residues 844-926 form a disordered region; sequence FQSASTAKGP…KELLKGPGPA (83 aa). Ser-865 carries the post-translational modification Phosphoserine. Thr-866 carries the post-translational modification Phosphothreonine. Residues 872 to 881 are compositionally biased toward basic and acidic residues; the sequence is KNLDGEKSTT.

Belongs to the beta-catenin family. Component of a ribonucleoprotein complex containing mRNAs and RNA-binding proteins including DDX5, HNRNPH2 and SRSF1 as well as ARVCF. Interacts (via the extreme C-terminus) with FRMPD2 (via the PDZ 2 domain). Interacts with CCDC85B. In terms of tissue distribution, expressed in optic nerve sheath envelope (at protein level). Expressed in heart (at protein level).

Its subcellular location is the cell junction. It localises to the adherens junction. The protein resides in the nucleus. The protein localises to the cytoplasm. Its function is as follows. Contributes to the regulation of alternative splicing of pre-mRNAs. This Rattus norvegicus (Rat) protein is Splicing regulator ARVCF.